A 258-amino-acid chain; its full sequence is Peptidase inhibitor 15 (258 aa).

Positions 1 to 19 are cleaved as a signal peptide; it reads MIAISAVSSALLFSLLCEA. The propeptide occupies 20–60; it reads STVVLLNSTDSSPPTNNFTDIEAALKAQLDSADIPKARRKR. 3 N-linked (GlcNAc...) asparagine glycosylation sites follow: Asn-26, Asn-36, and Asn-124. The SCP domain occupies 71-211; the sequence is LDYHNQVRGK…RRAVYLVCNY (141 aa).

It belongs to the CRISP family. Post-translationally, N-glycosylated. Weakly expressed. Expressed at low level in prostate, mammary gland, salivary gland and thyroid gland.

The protein resides in the secreted. In terms of biological role, serine protease inhibitor which displays weak inhibitory activity against trypsin. May play a role in facial patterning during embryonic development. The chain is Peptidase inhibitor 15 (PI15) from Homo sapiens (Human).